Consider the following 547-residue polypeptide: Delta-guaiene synthase 1 (547 aa).

The Mg(2+) site is built by Asp299, Asp303, and Asp444. Positions 299 to 303 (DDTYD) match the DDXXD motif motif.

The protein belongs to the terpene synthase family. Mg(2+) is required as a cofactor.

The enzyme catalyses (2E,6E)-farnesyl diphosphate = delta-guaiene + diphosphate. The catalysed reaction is (2E,6E)-farnesyl diphosphate = alpha-guaiene + diphosphate. It participates in secondary metabolite biosynthesis; terpenoid biosynthesis. Functionally, sesquiterpene synthase involved in the biosynthesis of delta-guaiene (81.2%) and alpha-guaiene (18.1%), two structures composed of five- and seven-membered rings. Also produces 0.7% of alpha-humulene. This chain is Delta-guaiene synthase 1 (C2), found in Aquilaria crassna (Eagle wood).